Reading from the N-terminus, the 326-residue chain is tRNA-modifying protein YgfZ (326 aa).

Residues W27 and W189 each coordinate folate.

This sequence belongs to the tRNA-modifying YgfZ family.

It localises to the cytoplasm. In terms of biological role, folate-binding protein involved in regulating the level of ATP-DnaA and in the modification of some tRNAs. It is probably a key factor in regulatory networks that act via tRNA modification, such as initiation of chromosomal replication. This is tRNA-modifying protein YgfZ from Escherichia fergusonii (strain ATCC 35469 / DSM 13698 / CCUG 18766 / IAM 14443 / JCM 21226 / LMG 7866 / NBRC 102419 / NCTC 12128 / CDC 0568-73).